The sequence spans 363 residues: NADH-quinone oxidoreductase subunit H (363 aa).

Helical transmembrane passes span 29–49 (VLKILLIAVPVIVTVAFYVVW), 62–82 (GPMYVGMGIFQAFADVFKLLF), 96–116 (FIIAPLLTLAPAFAAWSVVPF), 127–147 (VGLLYLLAMTSLGVYGIILAG), 163–183 (AAQVVSYEIAMGFALVGVMIA), 202–222 (FFDWFLIPLFPLFIVYWVSGV), 239–257 (IVAGHMVEYSGGAFALFFL), 264–286 (ILVSFLISIFFLGGWLSPIQGWV), 299–319 (TGGWPWLLMKVFFFASAYIWF), and 339–359 (FIPLTIVWIAVTALMVFYGVI).

Belongs to the complex I subunit 1 family. As to quaternary structure, NDH-1 is composed of 14 different subunits. Subunits NuoA, H, J, K, L, M, N constitute the membrane sector of the complex.

The protein localises to the cell inner membrane. It catalyses the reaction a quinone + NADH + 5 H(+)(in) = a quinol + NAD(+) + 4 H(+)(out). Its function is as follows. NDH-1 shuttles electrons from NADH, via FMN and iron-sulfur (Fe-S) centers, to quinones in the respiratory chain. The immediate electron acceptor for the enzyme in this species is believed to be ubiquinone. Couples the redox reaction to proton translocation (for every two electrons transferred, four hydrogen ions are translocated across the cytoplasmic membrane), and thus conserves the redox energy in a proton gradient. This subunit may bind ubiquinone. This is NADH-quinone oxidoreductase subunit H from Xanthomonas campestris pv. campestris (strain 8004).